We begin with the raw amino-acid sequence, 80 residues long: MPYQINIANIKINGVTQNGNIDVGPTVHNSHTANSKYFGANFSLGDLSPTSSLLNTGNIDSDVSDQDQIGNPSAPISNQI.

Residues 57 to 80 (GNIDSDVSDQDQIGNPSAPISNQI) form a disordered region.

This is an uncharacterized protein from Bacillus subtilis (strain 168).